The sequence spans 447 residues: Tubulin alpha-2 chain (447 aa).

7 residues coordinate GTP: Q11, E71, G144, T145, T179, N206, and N228. Residue E71 coordinates Mg(2+). E254 is a catalytic residue.

Belongs to the tubulin family. In terms of assembly, dimer of alpha and beta chains. A typical microtubule is a hollow water-filled tube with an outer diameter of 25 nm and an inner diameter of 15 nM. Alpha-beta heterodimers associate head-to-tail to form protofilaments running lengthwise along the microtubule wall with the beta-tubulin subunit facing the microtubule plus end conferring a structural polarity. Microtubules usually have 13 protofilaments but different protofilament numbers can be found in some organisms and specialized cells. Mg(2+) is required as a cofactor. Post-translationally, undergoes a tyrosination/detyrosination cycle, the cyclic removal and re-addition of a C-terminal tyrosine residue by the enzymes tubulin tyrosine carboxypeptidase (TTCP) and tubulin tyrosine ligase (TTL), respectively.

The protein resides in the cytoplasm. The protein localises to the cytoskeleton. The enzyme catalyses GTP + H2O = GDP + phosphate + H(+). In terms of biological role, tubulin is the major constituent of microtubules, a cylinder consisting of laterally associated linear protofilaments composed of alpha- and beta-tubulin heterodimers. Microtubules grow by the addition of GTP-tubulin dimers to the microtubule end, where a stabilizing cap forms. Below the cap, tubulin dimers are in GDP-bound state, owing to GTPase activity of alpha-tubulin. The polypeptide is Tubulin alpha-2 chain (TUBA2) (Eleusine indica (Goosegrass)).